Here is a 503-residue protein sequence, read N- to C-terminus: Aspartyl/glutamyl-tRNA(Asn/Gln) amidotransferase subunit B (503 aa).

This sequence belongs to the GatB/GatE family. GatB subfamily. Heterotrimer of A, B and C subunits.

It catalyses the reaction L-glutamyl-tRNA(Gln) + L-glutamine + ATP + H2O = L-glutaminyl-tRNA(Gln) + L-glutamate + ADP + phosphate + H(+). It carries out the reaction L-aspartyl-tRNA(Asn) + L-glutamine + ATP + H2O = L-asparaginyl-tRNA(Asn) + L-glutamate + ADP + phosphate + 2 H(+). Allows the formation of correctly charged Asn-tRNA(Asn) or Gln-tRNA(Gln) through the transamidation of misacylated Asp-tRNA(Asn) or Glu-tRNA(Gln) in organisms which lack either or both of asparaginyl-tRNA or glutaminyl-tRNA synthetases. The reaction takes place in the presence of glutamine and ATP through an activated phospho-Asp-tRNA(Asn) or phospho-Glu-tRNA(Gln). This Cereibacter sphaeroides (strain KD131 / KCTC 12085) (Rhodobacter sphaeroides) protein is Aspartyl/glutamyl-tRNA(Asn/Gln) amidotransferase subunit B.